The chain runs to 369 residues: Anhydro-N-acetylmuramic acid kinase (369 aa).

12–19 is a binding site for ATP; it reads GTSLDGVD.

This sequence belongs to the anhydro-N-acetylmuramic acid kinase family.

It carries out the reaction 1,6-anhydro-N-acetyl-beta-muramate + ATP + H2O = N-acetyl-D-muramate 6-phosphate + ADP + H(+). The protein operates within amino-sugar metabolism; 1,6-anhydro-N-acetylmuramate degradation. It functions in the pathway cell wall biogenesis; peptidoglycan recycling. Functionally, catalyzes the specific phosphorylation of 1,6-anhydro-N-acetylmuramic acid (anhMurNAc) with the simultaneous cleavage of the 1,6-anhydro ring, generating MurNAc-6-P. Is required for the utilization of anhMurNAc either imported from the medium or derived from its own cell wall murein, and thus plays a role in cell wall recycling. This is Anhydro-N-acetylmuramic acid kinase from Escherichia coli O8 (strain IAI1).